Reading from the N-terminus, the 170-residue chain is Protein-export protein SecB (170 aa).

Belongs to the SecB family. In terms of assembly, homotetramer, a dimer of dimers. One homotetramer interacts with 1 SecA dimer.

It is found in the cytoplasm. Functionally, one of the proteins required for the normal export of preproteins out of the cell cytoplasm. It is a molecular chaperone that binds to a subset of precursor proteins, maintaining them in a translocation-competent state. It also specifically binds to its receptor SecA. The chain is Protein-export protein SecB from Pasteurella multocida (strain Pm70).